The primary structure comprises 170 residues: Fluoride-specific ion channel FluC 2 (170 aa).

4 consecutive transmembrane segments (helical) span residues alanine 8–isoleucine 28, isoleucine 55–isoleucine 75, threonine 84–valine 104, and isoleucine 114–methionine 134. Residues glycine 92 and threonine 95 each coordinate Na(+).

This sequence belongs to the fluoride channel Fluc/FEX (TC 1.A.43) family.

It is found in the cell membrane. The enzyme catalyses fluoride(in) = fluoride(out). With respect to regulation, na(+) is not transported, but it plays an essential structural role and its presence is essential for fluoride channel function. In terms of biological role, fluoride-specific ion channel. Important for reducing fluoride concentration in the cell, thus reducing its toxicity. This chain is Fluoride-specific ion channel FluC 2, found in Corynebacterium jeikeium (strain K411).